The primary structure comprises 664 residues: Trifunctional UDP-glucose 4,6-dehydratase/UDP-4-keto-6-deoxy-D-glucose 3,5-epimerase/UDP-4-keto-L-rhamnose-reductase RHM3 (664 aa).

13-19 is an NAD(+) binding site; sequence GAAGFIA. A substrate-binding site is contributed by threonine 132. The active-site Proton donor is aspartate 133. Catalysis depends on proton acceptor residues glutamate 134 and tyrosine 159. 386–392 provides a ligand contact to NADP(+); that stretch reads GKTGWLG.

In the N-terminal section; belongs to the NAD(P)-dependent epimerase/dehydratase family. dTDP-glucose dehydratase subfamily. This sequence in the C-terminal section; belongs to the dTDP-4-dehydrorhamnose reductase family. NAD(+) serves as cofactor. NADP(+) is required as a cofactor. As to expression, expressed in roots, stems, seedlings, and siliques. Lower expression in inflorescence tips, and leaves.

It carries out the reaction UDP-alpha-D-glucose = UDP-4-dehydro-6-deoxy-alpha-D-glucose + H2O. Its pathway is carbohydrate biosynthesis. Its function is as follows. Trifunctional enzyme involved in UDP-beta-L-rhamnose biosynthesis, a precursor of the primary cell wall components rhamnogalacturonan I (RG-I) and rhamnogalacturonan II (RG-II). Catalyzes the dehydration of UDP-glucose to form UDP-4-dehydro-6-deoxy-D-glucose followed by the epimerization of the C3' and C5' positions of UDP-4-dehydro-6-deoxy-D-glucose to form UDP-4-keto-beta-L-rhamnose and the reduction of UDP-4-keto-beta-L-rhamnose to yield UDP-beta-L-rhamnose. This chain is Trifunctional UDP-glucose 4,6-dehydratase/UDP-4-keto-6-deoxy-D-glucose 3,5-epimerase/UDP-4-keto-L-rhamnose-reductase RHM3, found in Arabidopsis thaliana (Mouse-ear cress).